A 315-amino-acid polypeptide reads, in one-letter code: tRNA dimethylallyltransferase (315 aa).

ATP is bound at residue 13-20; the sequence is GPTASGKT. 15 to 20 serves as a coordination point for substrate; sequence TASGKT. 4 interaction with substrate tRNA regions span residues 38 to 41, 162 to 166, 243 to 248, and 276 to 283; these read DSAL, QRLSR, RCVGYR, and KRQITWLR.

Belongs to the IPP transferase family. As to quaternary structure, monomer. The cofactor is Mg(2+).

It catalyses the reaction adenosine(37) in tRNA + dimethylallyl diphosphate = N(6)-dimethylallyladenosine(37) in tRNA + diphosphate. Its function is as follows. Catalyzes the transfer of a dimethylallyl group onto the adenine at position 37 in tRNAs that read codons beginning with uridine, leading to the formation of N6-(dimethylallyl)adenosine (i(6)A). This Vibrio vulnificus (strain CMCP6) protein is tRNA dimethylallyltransferase.